A 200-amino-acid polypeptide reads, in one-letter code: Molybdenum cofactor guanylyltransferase (200 aa).

Residues 15-17, Lys-28, Asp-74, and Asp-104 each bind GTP; that span reads LSG. Residue Asp-104 coordinates Mg(2+).

This sequence belongs to the MobA family. Monomer. The cofactor is Mg(2+).

It is found in the cytoplasm. It carries out the reaction Mo-molybdopterin + GTP + H(+) = Mo-molybdopterin guanine dinucleotide + diphosphate. Its function is as follows. Transfers a GMP moiety from GTP to Mo-molybdopterin (Mo-MPT) cofactor (Moco or molybdenum cofactor) to form Mo-molybdopterin guanine dinucleotide (Mo-MGD) cofactor. In Pseudomonas fluorescens (strain SBW25), this protein is Molybdenum cofactor guanylyltransferase.